A 444-amino-acid chain; its full sequence is Vacuolar protein sorting-associated protein 4B (444 aa).

Residues 4-82 enclose the MIT domain; sequence TNTNLQKAID…KEYLKKKEKK (79 aa). A coiled-coil region spans residues 19-82; that stretch reads AQEDKAGNYE…KEYLKKKEKK (64 aa). The interval 77–118 is disordered; the sequence is KKKEKKPQKPVKEEQSGPVDEKGNDSDGEAESDDPEKKKLQN. Residues 86 to 101 show a composition bias toward basic and acidic residues; sequence PVKEEQSGPVDEKGND. A phosphoserine mark is found at Ser102 and Ser108. 174 to 181 is an ATP binding site; sequence GPPGTGKS. A Phosphoserine modification is found at Ser410.

It belongs to the AAA ATPase family. As to quaternary structure, proposed to be monomeric or homodimeric in nucleotide-free form and to oligomerize upon binding to ATP to form two stacked hexameric or heptameric rings with a central pore through which ESCRT-III substrates are translocated in an ATP-dependent manner. In vitro, associates on the inside of a helical tubular structure formed by a CHMP2A-CHMP3 polymer. Interacts with CHMP1A, CHMP1B, CHMP4B and CHMP6. Interacts with CHMP2A. Interacts with VPS4A; the interaction suggests a heteromeric assembly with VPS4A. Interacts with VTA1. As to expression, high level expression seen in the kidney. It is also expressed in the heart, brain, spleen, lung, liver, skeletal muscle, and testis.

The protein localises to the late endosome membrane. The enzyme catalyses ATP + H2O = ADP + phosphate + H(+). Its function is as follows. Involved in late steps of the endosomal multivesicular bodies (MVB) pathway. Recognizes membrane-associated ESCRT-III assemblies and catalyzes their disassembly, possibly in combination with membrane fission. Redistributes the ESCRT-III components to the cytoplasm for further rounds of MVB sorting. MVBs contain intraluminal vesicles (ILVs) that are generated by invagination and scission from the limiting membrane of the endosome and mostly are delivered to lysosomes enabling degradation of membrane proteins, such as stimulated growth factor receptors, lysosomal enzymes and lipids. VPS4A/B are required for the exosomal release of SDCBP, CD63 and syndecan. In terms of biological role, (Microbial infection) In conjunction with the ESCRT machinery also appears to function in topologically equivalent membrane fission events, such as the terminal stages of cytokinesis and enveloped virus budding (lentiviruses). The polypeptide is Vacuolar protein sorting-associated protein 4B (Mus musculus (Mouse)).